A 95-amino-acid polypeptide reads, in one-letter code: Aspartyl/glutamyl-tRNA(Asn/Gln) amidotransferase subunit C (95 aa).

Belongs to the GatC family. Heterotrimer of A, B and C subunits.

The catalysed reaction is L-glutamyl-tRNA(Gln) + L-glutamine + ATP + H2O = L-glutaminyl-tRNA(Gln) + L-glutamate + ADP + phosphate + H(+). It catalyses the reaction L-aspartyl-tRNA(Asn) + L-glutamine + ATP + H2O = L-asparaginyl-tRNA(Asn) + L-glutamate + ADP + phosphate + 2 H(+). Allows the formation of correctly charged Asn-tRNA(Asn) or Gln-tRNA(Gln) through the transamidation of misacylated Asp-tRNA(Asn) or Glu-tRNA(Gln) in organisms which lack either or both of asparaginyl-tRNA or glutaminyl-tRNA synthetases. The reaction takes place in the presence of glutamine and ATP through an activated phospho-Asp-tRNA(Asn) or phospho-Glu-tRNA(Gln). The protein is Aspartyl/glutamyl-tRNA(Asn/Gln) amidotransferase subunit C of Chlorobium phaeobacteroides (strain BS1).